Consider the following 89-residue polypeptide: Co-chaperonin GroES (89 aa).

It belongs to the GroES chaperonin family. In terms of assembly, heptamer of 7 subunits arranged in a ring. Interacts with the chaperonin GroEL.

It localises to the cytoplasm. In terms of biological role, together with the chaperonin GroEL, plays an essential role in assisting protein folding. The GroEL-GroES system forms a nano-cage that allows encapsulation of the non-native substrate proteins and provides a physical environment optimized to promote and accelerate protein folding. GroES binds to the apical surface of the GroEL ring, thereby capping the opening of the GroEL channel. This Kosmotoga olearia (strain ATCC BAA-1733 / DSM 21960 / TBF 19.5.1) protein is Co-chaperonin GroES.